The sequence spans 233 residues: Sugar fermentation stimulation protein homolog (233 aa).

The protein belongs to the SfsA family.

The sequence is that of Sugar fermentation stimulation protein homolog from Pyrobaculum neutrophilum (strain DSM 2338 / JCM 9278 / NBRC 100436 / V24Sta) (Thermoproteus neutrophilus).